Reading from the N-terminus, the 176-residue chain is MMETTENSMREIVIDKVVVNIGVGAAGERLNRAAKVLELLTHHKPAFTSAKRTVRDFNIRKGLNIGVKVTLRKDDALSFLKEAFYAKDYKIPVYSFDKNGNAYFGISDYTDFKGMKYDPDIGIFGMDIAIVFRRRGGYRIEKRRIKKMHIPKKMRISKEETIKYLQENFNVKIIGD.

The protein belongs to the universal ribosomal protein uL5 family. Part of the 50S ribosomal subunit; contacts the 5S rRNA and probably tRNA. Forms a bridge to the 30S subunit in the 70S ribosome.

This is one of the proteins that bind and probably mediate the attachment of the 5S RNA into the large ribosomal subunit, where it forms part of the central protuberance. In the 70S ribosome it contacts protein S13 of the 30S subunit (bridge B1b), connecting the 2 subunits; this bridge is implicated in subunit movement. May contact the P site tRNA; the 5S rRNA and some of its associated proteins might help stabilize positioning of ribosome-bound tRNAs. This Picrophilus torridus (strain ATCC 700027 / DSM 9790 / JCM 10055 / NBRC 100828 / KAW 2/3) protein is Large ribosomal subunit protein uL5.